A 267-amino-acid polypeptide reads, in one-letter code: Apolipoprotein A-I (267 aa).

The first 18 residues, 1-18 (MKAAVLTLAVLFLTGSQA), serve as a signal peptide directing secretion. A run of 2 repeats spans residues 68–89 (LKLLDNWDSVTSTFSKLREQLG) and 90–111 (PVTQEFWDNLEKETEGLRQEMS). A 10 X approximate tandem repeats region spans residues 68 to 267 (LKLLDNWDSV…EEYTKKLNTQ (200 aa)). At Met-110 the chain carries Methionine sulfoxide. One copy of the 3; half-length repeat lies at 112 to 122 (KDLEEVKAKVQ). Repeat copies occupy residues 123–144 (PYLDDFQKKWQEEMELYRQKVE), 145–166 (PLRAELQEGARQKLHELQEKLS), 167–188 (PLGEEMRDRARAHVDALRTHLA), 189–210 (PYSDELRQRLAARLEALKENGG), and 211–232 (ARLAEYHAKATEHLSTLSEKAK). The residue at position 136 (Met-136) is a Methionine sulfoxide. The stretch at 233–243 (PALEDLRQGLL) is one 9; half-length repeat. Copy 10 of the repeat occupies 244 to 267 (PVLESFKVSFLSALEEYTKKLNTQ).

Belongs to the apolipoprotein A1/A4/E family. Homodimer. Interacts with APOA1BP and CLU. Component of a sperm activating protein complex (SPAP), consisting of APOA1, an immunoglobulin heavy chain, an immunoglobulin light chain and albumin. Interacts with NDRG1. Interacts with SCGB3A2. Interacts with NAXE and YJEFN3. Post-translationally, glycosylated. Palmitoylated. In terms of processing, phosphorylation sites are present in the extracellular medium. In terms of tissue distribution, major protein of plasma HDL, also found in chylomicrons.

It localises to the secreted. In terms of biological role, participates in the reverse transport of cholesterol from tissues to the liver for excretion by promoting cholesterol efflux from tissues and by acting as a cofactor for the lecithin cholesterol acyltransferase (LCAT). As part of the SPAP complex, activates spermatozoa motility. The sequence is that of Apolipoprotein A-I (APOA1) from Pan troglodytes (Chimpanzee).